A 402-amino-acid polypeptide reads, in one-letter code: MEQKPSTLDPLSEPEDTRWLDGKRKRKSSQCLVKSSMSGYIPSYLDKDEQCVVCGDKATGYHYRCITCAGCKGFFRRTIQKNLHPTYSCKYDGCCVIDKITRNQCQLCRFKKCISVGMAMDLVLYDSKRVAKRKLIEENRERRRKEEMIKSLQHRPNPSAEEWELIHVVTEAHRSTNAQGSHWKQKRKFLPEDIGQSPMASMPDGDKVDLEAFSEFTKIITPAITRVVDFAKKLPMFSELPCEDQIILLKGCCMEIMSLRAAVRYDPEGGTLTLSGEMAVKREQLKNGGLRVVSDAIFDLGKSLSAFNLDDTEVALLQAVLLMSSDRTGLICVEKIEKCQETYLLAFEHYINYRKHNIPHFWPKLLMKVTDLRMIRACHASRFLHMKVECPTELFPPLFLEV.

The tract at residues 1 to 22 (MEQKPSTLDPLSEPEDTRWLDG) is disordered. A modulating region spans residues 1–50 (MEQKPSTLDPLSEPEDTRWLDGKRKRKSSQCLVKSSMSGYIPSYLDKDEQ). A Phosphoserine; by CK2 modification is found at Ser-12. At Ser-28 the chain carries Phosphoserine. Zn(2+) is bound by residues Cys-51, Cys-54, Cys-68, Cys-71, Cys-89, Cys-95, Cys-105, and Cys-108. 2 NR C4-type zinc fingers span residues 51–71 (CVVCGDKATGYHYRCITCAGC) and 89–113 (CKYDGCCVIDKITRNQCQLCRFKKC). The nuclear receptor DNA-binding region spans 51-125 (CVVCGDKATG…VGMAMDLVLY (75 aa)). One can recognise an NR LBD domain in the interval 161-402 (EEWELIHVVT…ELFPPLFLEV (242 aa)). Arg-226 and Ser-275 together coordinate 3,3',5-triiodo-L-thyronine.

The protein belongs to the nuclear hormone receptor family. NR1 subfamily. As to quaternary structure, probably interacts with SFPQ.

Its subcellular location is the nucleus. In terms of biological role, nuclear hormone receptor that can act as a repressor or activator of transcription. High affinity receptor for thyroid hormones, including triiodothyronine and thyroxine. This chain is Thyroid hormone receptor alpha (THRA), found in Pygoscelis adeliae (Adelie penguin).